The primary structure comprises 88 residues: Small ribosomal subunit protein uS17 (88 aa).

This sequence belongs to the universal ribosomal protein uS17 family. Part of the 30S ribosomal subunit.

One of the primary rRNA binding proteins, it binds specifically to the 5'-end of 16S ribosomal RNA. The sequence is that of Small ribosomal subunit protein uS17 from Leuconostoc mesenteroides subsp. mesenteroides (strain ATCC 8293 / DSM 20343 / BCRC 11652 / CCM 1803 / JCM 6124 / NCDO 523 / NBRC 100496 / NCIMB 8023 / NCTC 12954 / NRRL B-1118 / 37Y).